The following is a 589-amino-acid chain: LRR receptor-like serine/threonine-protein kinase FEI 2 (589 aa).

The N-terminal stretch at 1–28 is a signal peptide; sequence MGICLMKRCCSWFLLISFLSALTNENEA. Residues 29-236 are Extracellular-facing; the sequence is ISPDGEALLS…TGQGGNNPKR (208 aa). LRR repeat units lie at residues 72–96, 97–120, 122–144, 145–168, and 170–193; these read TKRV…LGKL, DQLR…LGNC, ALEG…IGNL, SGLK…LGQL, and RLTK…LLAR. 2 N-linked (GlcNAc...) asparagine glycosylation sites follow: Asn119 and Asn143. N-linked (GlcNAc...) asparagine glycosylation is found at Asn175, Asn215, and Asn219. The chain crosses the membrane as a helical span at residues 237–257; that stretch reads LLISASATVGGLLLVALMCFW. Residues 258–589 are Cytoplasmic-facing; the sequence is GCFLYKKLGR…PSDFYDSSSD (332 aa). Positions 304 to 576 constitute a Protein kinase domain; sequence LNEEHIIGCG…VVQLLESEVM (273 aa). ATP-binding positions include 310–318 and Lys332; that span reads IGCGGFGTV. The residue at position 384 (Ser384) is a Phosphoserine. The active-site Proton acceptor is Asp427. Phosphothreonine is present on residues Thr460, Thr461, and Thr466. Position 474 is a phosphotyrosine (Tyr474).

It belongs to the protein kinase superfamily. Ser/Thr protein kinase family. Interacts with the ACC synthases ACS5 and ACS9 but not ACS2, via the kinase domain. Autophosphorylated. Expressed in the root meristem and elongation zone, and in hypocotyls of etiolated seedlings.

The protein localises to the cell membrane. It carries out the reaction L-seryl-[protein] + ATP = O-phospho-L-seryl-[protein] + ADP + H(+). The enzyme catalyses L-threonyl-[protein] + ATP = O-phospho-L-threonyl-[protein] + ADP + H(+). Involved in the signaling pathway that regulates cell wall function, including cellulose biosynthesis, likely via an 1-aminocyclopropane-1-carboxylic acid (ACC)-mediated signal (a precursor of ethylene). In Arabidopsis thaliana (Mouse-ear cress), this protein is LRR receptor-like serine/threonine-protein kinase FEI 2 (FEI2).